Consider the following 193-residue polypeptide: MTGPSTGPALVVGLGNPGSEYERTRHNVGFLVADVLAERVGDRFAVHKKSGADLLQARLDGRQVLIAKPRSYMNLSGRPVAALARFFSVPPTEVIVVHDELDLPFGAVRLKRGGGEGGHNGLRSISSALTTKDYLRTRIGIGRPPGRQDPADFVLKPFAAAERKEVPVIVEQAADAVELLLRVGLEAAQNQLH.

Position 21 (Tyr21) interacts with tRNA. His26 serves as the catalytic Proton acceptor. Residues Tyr72, Asn74, and Asn120 each coordinate tRNA.

The protein belongs to the PTH family. In terms of assembly, monomer.

It localises to the cytoplasm. The enzyme catalyses an N-acyl-L-alpha-aminoacyl-tRNA + H2O = an N-acyl-L-amino acid + a tRNA + H(+). Its function is as follows. Hydrolyzes ribosome-free peptidyl-tRNAs (with 1 or more amino acids incorporated), which drop off the ribosome during protein synthesis, or as a result of ribosome stalling. Catalyzes the release of premature peptidyl moieties from peptidyl-tRNA molecules trapped in stalled 50S ribosomal subunits, and thus maintains levels of free tRNAs and 50S ribosomes. The sequence is that of Peptidyl-tRNA hydrolase from Nocardia farcinica (strain IFM 10152).